Reading from the N-terminus, the 195-residue chain is Flavin-dependent monooxygenase, reductase subunit HsaB (195 aa).

FAD is bound by residues 42 to 46 (PVGFA), 48 to 49 (QS), 63 to 65 (CPT), 69 to 70 (RS), and 95 to 96 (RF). Residue 160-163 (FYRG) participates in NAD(+) binding.

Belongs to the non-flavoprotein flavin reductase family. As to quaternary structure, hsaAB monooxygenase consists of an oxygenase component HsaA and a reductase component HsaB.

It catalyses the reaction a reduced flavin + NAD(+) = an oxidized flavin + NADH + 2 H(+). The protein operates within lipid metabolism; steroid biosynthesis. In terms of biological role, catalyzes the reduction of free flavins (FMN or FAD) by NADH. Subsequently, the reduced flavins diffuse to the HsaA oxygenase subunit. This Rhodococcus jostii (strain RHA1) protein is Flavin-dependent monooxygenase, reductase subunit HsaB (hsaB).